Reading from the N-terminus, the 229-residue chain is 7-cyano-7-deazaguanine synthase (229 aa).

8-18 (CSGGLDSSVIA) is a binding site for ATP. Positions 190, 203, 206, and 209 each coordinate Zn(2+).

Belongs to the QueC family. It depends on Zn(2+) as a cofactor.

The enzyme catalyses 7-carboxy-7-deazaguanine + NH4(+) + ATP = 7-cyano-7-deazaguanine + ADP + phosphate + H2O + H(+). The protein operates within purine metabolism; 7-cyano-7-deazaguanine biosynthesis. In terms of biological role, catalyzes the ATP-dependent conversion of 7-carboxy-7-deazaguanine (CDG) to 7-cyano-7-deazaguanine (preQ(0)). The chain is 7-cyano-7-deazaguanine synthase from Methanopyrus kandleri (strain AV19 / DSM 6324 / JCM 9639 / NBRC 100938).